The following is a 488-amino-acid chain: Ribulose bisphosphate carboxylase large chain (488 aa).

Residues Asn127 and Thr177 each coordinate substrate. Residue Lys179 is the Proton acceptor of the active site. Lys181 provides a ligand contact to substrate. Mg(2+) is bound by residues Lys205, Asp207, and Glu208. Lys205 carries the post-translational modification N6-carboxylysine. The active-site Proton acceptor is the His297. Positions 298, 330, and 382 each coordinate substrate.

Belongs to the RuBisCO large chain family. Type I subfamily. In terms of assembly, heterohexadecamer of 8 large chains and 8 small chains. Requires Mg(2+) as cofactor.

The protein resides in the plastid. It is found in the chloroplast. The enzyme catalyses 2 (2R)-3-phosphoglycerate + 2 H(+) = D-ribulose 1,5-bisphosphate + CO2 + H2O. It carries out the reaction D-ribulose 1,5-bisphosphate + O2 = 2-phosphoglycolate + (2R)-3-phosphoglycerate + 2 H(+). RuBisCO catalyzes two reactions: the carboxylation of D-ribulose 1,5-bisphosphate, the primary event in carbon dioxide fixation, as well as the oxidative fragmentation of the pentose substrate in the photorespiration process. Both reactions occur simultaneously and in competition at the same active site. This Antithamnion sp. (Red alga) protein is Ribulose bisphosphate carboxylase large chain.